Consider the following 365-residue polypeptide: MSQNLSAQNSSETPRIKVAIIYGGRSSEHSVSCVSAGAIMAHLDPQRYEVFPVGITHDGVWTVGESDPSRLKTVDRVMPEVQFTREVSLSVNPTTAGELCFEDGSLYAKVDVVFPVLHGRFGEDGTIQGLFELSGVPYVGTGVLSSACGMDKEFTKKLMAAEGLPVGKEVILRGSETLTEEHKRELGLPVFVKPARGGSSIGISRVADWSEWDAALSLAREHDSKVIVEAEIVGVEVECGVLERIDGSLMASVPAQLQDTDEGDEGFYGFDTKYLDDVVTAHIPAPFDAETTALIQELSLKAFTALSCRGLARVDFFVTDHGPVLNEINTMPGFTPISMYPQVFEATGIGYAQLLDNLIEQALHK.

The ATP-grasp domain occupies 156–360; sequence KKLMAAEGLP…YAQLLDNLIE (205 aa). Residue 183–238 participates in ATP binding; it reads KRELGLPVFVKPARGGSSIGISRVADWSEWDAALSLAREHDSKVIVEAEIVGVEVE. Mg(2+)-binding residues include aspartate 315, glutamate 327, and asparagine 329.

The protein belongs to the D-alanine--D-alanine ligase family. Mg(2+) is required as a cofactor. Mn(2+) serves as cofactor.

The protein resides in the cytoplasm. It carries out the reaction 2 D-alanine + ATP = D-alanyl-D-alanine + ADP + phosphate + H(+). It functions in the pathway cell wall biogenesis; peptidoglycan biosynthesis. In terms of biological role, cell wall formation. The chain is D-alanine--D-alanine ligase from Corynebacterium diphtheriae (strain ATCC 700971 / NCTC 13129 / Biotype gravis).